A 158-amino-acid polypeptide reads, in one-letter code: Transcription elongation factor GreA (158 aa).

The protein belongs to the GreA/GreB family.

Functionally, necessary for efficient RNA polymerase transcription elongation past template-encoded arresting sites. The arresting sites in DNA have the property of trapping a certain fraction of elongating RNA polymerases that pass through, resulting in locked ternary complexes. Cleavage of the nascent transcript by cleavage factors such as GreA or GreB allows the resumption of elongation from the new 3'terminus. GreA releases sequences of 2 to 3 nucleotides. This chain is Transcription elongation factor GreA, found in Psychrobacter cryohalolentis (strain ATCC BAA-1226 / DSM 17306 / VKM B-2378 / K5).